The sequence spans 117 residues: Aspartate 1-decarboxylase (117 aa).

The active-site Schiff-base intermediate with substrate; via pyruvic acid is Ser-25. Ser-25 carries the post-translational modification Pyruvic acid (Ser). Thr-57 is a substrate binding site. Residue Tyr-58 is the Proton donor of the active site. Gly-73–Ala-75 contributes to the substrate binding site.

This sequence belongs to the PanD family. As to quaternary structure, heterooctamer of four alpha and four beta subunits. Pyruvate serves as cofactor. Is synthesized initially as an inactive proenzyme, which is activated by self-cleavage at a specific serine bond to produce a beta-subunit with a hydroxyl group at its C-terminus and an alpha-subunit with a pyruvoyl group at its N-terminus.

It localises to the cytoplasm. The catalysed reaction is L-aspartate + H(+) = beta-alanine + CO2. Its pathway is cofactor biosynthesis; (R)-pantothenate biosynthesis; beta-alanine from L-aspartate: step 1/1. In terms of biological role, catalyzes the pyruvoyl-dependent decarboxylation of aspartate to produce beta-alanine. In Bacteroides thetaiotaomicron (strain ATCC 29148 / DSM 2079 / JCM 5827 / CCUG 10774 / NCTC 10582 / VPI-5482 / E50), this protein is Aspartate 1-decarboxylase.